A 492-amino-acid polypeptide reads, in one-letter code: Protein nucleotidyltransferase YdiU (492 aa).

Residues Gly88, Gly90, Arg91, Lys111, Asp123, Gly124, Arg174, and Arg181 each coordinate ATP. The active-site Proton acceptor is the Asp250. Mg(2+) contacts are provided by Asn251 and Asp260. Asp260 lines the ATP pocket.

This sequence belongs to the SELO family. It depends on Mg(2+) as a cofactor. The cofactor is Mn(2+).

The catalysed reaction is L-seryl-[protein] + ATP = 3-O-(5'-adenylyl)-L-seryl-[protein] + diphosphate. The enzyme catalyses L-threonyl-[protein] + ATP = 3-O-(5'-adenylyl)-L-threonyl-[protein] + diphosphate. It carries out the reaction L-tyrosyl-[protein] + ATP = O-(5'-adenylyl)-L-tyrosyl-[protein] + diphosphate. It catalyses the reaction L-histidyl-[protein] + UTP = N(tele)-(5'-uridylyl)-L-histidyl-[protein] + diphosphate. The catalysed reaction is L-seryl-[protein] + UTP = O-(5'-uridylyl)-L-seryl-[protein] + diphosphate. The enzyme catalyses L-tyrosyl-[protein] + UTP = O-(5'-uridylyl)-L-tyrosyl-[protein] + diphosphate. Nucleotidyltransferase involved in the post-translational modification of proteins. It can catalyze the addition of adenosine monophosphate (AMP) or uridine monophosphate (UMP) to a protein, resulting in modifications known as AMPylation and UMPylation. In Rhodopseudomonas palustris (strain TIE-1), this protein is Protein nucleotidyltransferase YdiU.